A 170-amino-acid polypeptide reads, in one-letter code: uncharacterized protein (170 aa).

A disordered region spans residues 35-57 (EEVMPATAPSTDPAVPKDAQEAD).

This is an uncharacterized protein from Candida tsukubaensis (Yeast).